We begin with the raw amino-acid sequence, 445 residues long: MEGGGDDDGGRSRAEAIMRELERLRAEREELDGRIRLLESQLRLGAAPLPPSAAAEVEPTGSPSSSSSAAADMISRYRRHLLLPQFGLEGQRKLSQSSILVVGAGGLGSPVAMYLAACGVGCLGIVDGDRVELDNLHRQIIHIEAYVGQPKVKSTAASCRAYDIVVDATNNLPSRYMISDCCVLMNKPLISGSAVGLEGQLTVYHHNGSPCYRCLYPNPPSSPTSQSCSDNGILGILPGVIGCLQALEAIKVATAVGKPLCGRMLHFDALSSHTRIVKISRSSPTCKVCGENPVFTKEDFVNFDYESFTQSPMSKNSTTRSLNLLPENARVSCRDYKKVLDSGRPHLLVDVRPSHHFQIASMAHSINVPLSLLEEKLPLLRDSAREVSSRRDGRQHCPVYVICRRGNDSQVAVQILRENGFLYASDVAGGFESWAKEVDPSFLLY.

Residues 49–70 (LPPSAAAEVEPTGSPSSSSSAA) are disordered. ATP-binding positions include Gly-106, Asp-127, 134–138 (DNLHR), Lys-151, and 170–171 (NN). The Zn(2+) site is built by Cys-211 and Cys-214. Residue Cys-228 is the Glycyl thioester intermediate; for adenylyltransferase activity of the active site. 2 residues coordinate Zn(2+): Cys-286 and Cys-289. The Rhodanese domain occupies 342–443 (SGRPHLLVDV…WAKEVDPSFL (102 aa)). Catalysis depends on Cys-403, which acts as the Cysteine persulfide intermediate; for sulfurtransferase activity.

It in the N-terminal section; belongs to the HesA/MoeB/ThiF family. UBA4 subfamily. Zn(2+) is required as a cofactor.

Its subcellular location is the cytoplasm. The protein resides in the cytosol. The enzyme catalyses [molybdopterin-synthase sulfur-carrier protein]-C-terminal Gly-Gly + ATP + H(+) = [molybdopterin-synthase sulfur-carrier protein]-C-terminal Gly-Gly-AMP + diphosphate. It carries out the reaction [molybdopterin-synthase sulfur-carrier protein]-C-terminal Gly-Gly-AMP + S-sulfanyl-L-cysteinyl-[cysteine desulfurase] + AH2 = [molybdopterin-synthase sulfur-carrier protein]-C-terminal-Gly-aminoethanethioate + L-cysteinyl-[cysteine desulfurase] + A + AMP + 2 H(+). It participates in tRNA modification; 5-methoxycarbonylmethyl-2-thiouridine-tRNA biosynthesis. It functions in the pathway cofactor biosynthesis; molybdopterin biosynthesis. Plays a central role in 2-thiolation of mcm(5)S(2)U at tRNA wobble positions of cytosolic tRNA(Lys), tRNA(Glu) and tRNA(Gln). Also essential during biosynthesis of the molybdenum cofactor. Acts by mediating the C-terminal thiocarboxylation of sulfur carriers URM1 and MOCS2A. Its N-terminus first activates URM1 and MOCS2A as acyl-adenylates (-COAMP), then the persulfide sulfur on the catalytic cysteine is transferred to URM1 and MOCS2A to form thiocarboxylation (-COSH) of their C-terminus. The reaction probably involves hydrogen sulfide that is generated from the persulfide intermediate and that acts as a nucleophile towards URM1 and MOCS2A. Subsequently, a transient disulfide bond is formed. Does not use thiosulfate as sulfur donor; NFS1 probably acting as a sulfur donor for thiocarboxylation reactions. This is Adenylyltransferase and sulfurtransferase MOCS3 from Oryza sativa subsp. japonica (Rice).